A 208-amino-acid polypeptide reads, in one-letter code: Uracil phosphoribosyltransferase (208 aa).

Residues Arg78, Arg103, and 130–138 (DPMLATGGS) each bind 5-phospho-alpha-D-ribose 1-diphosphate. Residues Ile193 and 198–200 (GDA) contribute to the uracil site. Asp199 lines the 5-phospho-alpha-D-ribose 1-diphosphate pocket.

The protein belongs to the UPRTase family. Requires Mg(2+) as cofactor.

The enzyme catalyses UMP + diphosphate = 5-phospho-alpha-D-ribose 1-diphosphate + uracil. Its pathway is pyrimidine metabolism; UMP biosynthesis via salvage pathway; UMP from uracil: step 1/1. Allosterically activated by GTP. Catalyzes the conversion of uracil and 5-phospho-alpha-D-ribose 1-diphosphate (PRPP) to UMP and diphosphate. This chain is Uracil phosphoribosyltransferase, found in Photorhabdus laumondii subsp. laumondii (strain DSM 15139 / CIP 105565 / TT01) (Photorhabdus luminescens subsp. laumondii).